Here is an 89-residue protein sequence, read N- to C-terminus: Large ribosomal subunit protein bL27 (89 aa).

The disordered stretch occupies residues 1–22; sequence MAHKKAGGSSRNGRDSESKRLG.

Belongs to the bacterial ribosomal protein bL27 family.

The protein is Large ribosomal subunit protein bL27 of Rhizobium etli (strain CIAT 652).